Consider the following 824-residue polypeptide: Neuronal PAS domain-containing protein 2 (824 aa).

Basic and acidic residues predominate over residues 1-10; the sequence is MDEDEKDRAK. The tract at residues 1-21 is disordered; it reads MDEDEKDRAKRASRNKSEKKR. The interval 1–61 is sufficient for heterodimer formation with BMAL1, E-box binding and for the effect of NADPH; the sequence is MDEDEKDRAK…VIGFLQKHNE (61 aa). Residues 9-59 enclose the bHLH domain; it reads AKRASRNKSEKKRRDQFNVLIKELSSMLPGNTRKMDKTTVLEKVIGFLQKH. One can recognise a PAS 1 domain in the interval 82 to 152; sequence NEEFTQLMLE…KILSSHMLVT (71 aa). Heme b is bound by residues His119 and His171. One can recognise a PAS 2 domain in the interval 237 to 307; the sequence is FLKEMCIVDE…RCHQHLMQFG (71 aa). Residues 311–354 enclose the PAC domain; that stretch reads SCCYRFLTKGQQWIWLQTHYYITYHQWNSKPEFIVCTHSVVSYA. 4 disordered regions span residues 367–437, 556–667, 681–704, and 739–824; these read EDPP…MAEA, SSTQ…PDFS, QPMMPGSCDARQPSEVSRTGRQVK, and PSFP…QPPR. The span at 378–390 shows a compositional bias: basic and acidic residues; that stretch reads ALKDKGSSLEPRQ. Residues 421 to 431 are compositionally biased toward polar residues; that stretch reads TAMSEPTSTPT. Residues 559 to 576 are compositionally biased toward low complexity; that stretch reads QRPEAQQQLQQRSAAVTQ. Over residues 587 to 610 the composition is skewed to polar residues; sequence GQISSAQVTSQHLLRESSVISTQG. Residues 614–636 are compositionally biased toward low complexity; sequence MRSSQLMQSSGRSGSSLVSPFSS. Composition is skewed to polar residues over residues 645 to 664 and 694 to 704; these read LNLTTPASTSQDASQCQPSP and SEVSRTGRQVK. Residues 739-760 are compositionally biased toward low complexity; the sequence is PSFPASQPSPLQPAQARQQPPQ. Polar residues predominate over residues 766–789; it reads QAPTSLHSEQQDSLLLSTYSQQPG. The span at 794–805 shows a compositional bias: pro residues; that stretch reads PQPPPAQPQPLR. The span at 809-824 shows a compositional bias: low complexity; sequence RVSSLSESSGLQQPPR.

Component of the circadian clock oscillator which includes the CRY proteins, CLOCK or NPAS2, BMAL1 or BMAL2, CSNK1D and/or CSNK1E, TIMELESS and the PER proteins. Efficient DNA binding requires dimerization with another bHLH protein. Forms a heterodimer with BMAL1 and this heterodimerization is required for E-box-dependent transactivation. Interacts with NCOA3, KAT2B, CREBBP and EP300. Heme serves as cofactor.

It is found in the nucleus. Its activity is regulated as follows. Carbon monoxide (CO) and the redox state of the cell can modulate the transcriptional activity of the NPAS2-BMAL1 heterodimer. NADH and NADPH enhance the DNA-binding activity of the heterodimer whereas CO binds the heme group in NPAS2 and inhibits the DNA-binding activity of the heterodimer. Functionally, transcriptional activator which forms a core component of the circadian clock. The circadian clock, an internal time-keeping system, regulates various physiological processes through the generation of approximately 24 hour circadian rhythms in gene expression, which are translated into rhythms in metabolism and behavior. It is derived from the Latin roots 'circa' (about) and 'diem' (day) and acts as an important regulator of a wide array of physiological functions including metabolism, sleep, body temperature, blood pressure, endocrine, immune, cardiovascular, and renal function. Consists of two major components: the central clock, residing in the suprachiasmatic nucleus (SCN) of the brain, and the peripheral clocks that are present in nearly every tissue and organ system. Both the central and peripheral clocks can be reset by environmental cues, also known as Zeitgebers (German for 'timegivers'). The predominant Zeitgeber for the central clock is light, which is sensed by retina and signals directly to the SCN. The central clock entrains the peripheral clocks through neuronal and hormonal signals, body temperature and feeding-related cues, aligning all clocks with the external light/dark cycle. Circadian rhythms allow an organism to achieve temporal homeostasis with its environment at the molecular level by regulating gene expression to create a peak of protein expression once every 24 hours to control when a particular physiological process is most active with respect to the solar day. Transcription and translation of core clock components (CLOCK, NPAS2, BMAL1, BMAL2, PER1, PER2, PER3, CRY1 and CRY2) plays a critical role in rhythm generation, whereas delays imposed by post-translational modifications (PTMs) are important for determining the period (tau) of the rhythms (tau refers to the period of a rhythm and is the length, in time, of one complete cycle). A diurnal rhythm is synchronized with the day/night cycle, while the ultradian and infradian rhythms have a period shorter and longer than 24 hours, respectively. Disruptions in the circadian rhythms contribute to the pathology of cardiovascular diseases, cancer, metabolic syndromes and aging. A transcription/translation feedback loop (TTFL) forms the core of the molecular circadian clock mechanism. Transcription factors, CLOCK or NPAS2 and BMAL1 or BMAL2, form the positive limb of the feedback loop, act in the form of a heterodimer and activate the transcription of core clock genes and clock-controlled genes (involved in key metabolic processes), harboring E-box elements (5'-CACGTG-3') within their promoters. The core clock genes: PER1/2/3 and CRY1/2 which are transcriptional repressors form the negative limb of the feedback loop and interact with the CLOCK|NPAS2-BMAL1|BMAL2 heterodimer inhibiting its activity and thereby negatively regulating their own expression. This heterodimer also activates nuclear receptors NR1D1/2 and RORA/B/G, which form a second feedback loop and which activate and repress BMAL1 transcription, respectively. The NPAS2-BMAL1 heterodimer positively regulates the expression of MAOA, F7 and LDHA and modulates the circadian rhythm of daytime contrast sensitivity by regulating the rhythmic expression of adenylate cyclase type 1 (ADCY1) in the retina. NPAS2 plays an important role in sleep homeostasis and in maintaining circadian behaviors in normal light/dark and feeding conditions and in the effective synchronization of feeding behavior with scheduled food availability. Regulates the gene transcription of key metabolic pathways in the liver and is involved in DNA damage response by regulating several cell cycle and DNA repair genes. Controls the circadian rhythm of NR0B2 expression by binding rhythmically to its promoter. Mediates the diurnal variation in the expression of GABARA1 receptor in the brain and contributes to the regulation of anxiety-like behaviors and GABAergic neurotransmission in the ventral striatum. The sequence is that of Neuronal PAS domain-containing protein 2 (NPAS2) from Homo sapiens (Human).